Consider the following 412-residue polypeptide: Thyroxine-binding globulin (412 aa).

Positions 1–16 (MPLFLYMVLLVLGIHC) are cleaved as a signal peptide. 5 N-linked (GlcNAc...) asparagine glycosylation sites follow: Asn20, Asn35, Asn98, Asn164, and Asn252. Thyroxine contacts are provided by Asn292 and Lys395.

This sequence belongs to the serpin family. In terms of tissue distribution, expressed by the liver and secreted in plasma.

It is found in the secreted. In terms of biological role, major thyroid hormone transport protein in serum. In Sus scrofa (Pig), this protein is Thyroxine-binding globulin (SERPINA7).